A 379-amino-acid polypeptide reads, in one-letter code: Cytochrome b (379 aa).

4 helical membrane-spanning segments follow: residues 33 to 53 (FGSL…FLAM), 77 to 98 (WLIR…FIHV), 113 to 133 (WNIG…GYVL), and 178 to 198 (FFAF…VHLL). His83 and His97 together coordinate heme b. His182 and His196 together coordinate heme b. His201 serves as a coordination point for a ubiquinone. Transmembrane regions (helical) follow at residues 226–246 (IKDL…ALFF), 288–308 (LGGV…PLLN), 320–340 (ITQT…WIGG), and 347–367 (FTTI…ILMP).

Belongs to the cytochrome b family. In terms of assembly, the cytochrome bc1 complex contains 11 subunits: 3 respiratory subunits (MT-CYB, CYC1 and UQCRFS1), 2 core proteins (UQCRC1 and UQCRC2) and 6 low-molecular weight proteins (UQCRH/QCR6, UQCRB/QCR7, UQCRQ/QCR8, UQCR10/QCR9, UQCR11/QCR10 and a cleavage product of UQCRFS1). This cytochrome bc1 complex then forms a dimer. Heme b is required as a cofactor.

It is found in the mitochondrion inner membrane. Its function is as follows. Component of the ubiquinol-cytochrome c reductase complex (complex III or cytochrome b-c1 complex) that is part of the mitochondrial respiratory chain. The b-c1 complex mediates electron transfer from ubiquinol to cytochrome c. Contributes to the generation of a proton gradient across the mitochondrial membrane that is then used for ATP synthesis. The polypeptide is Cytochrome b (MT-CYB) (Akodon aerosus (Highland grass mouse)).